A 328-amino-acid chain; its full sequence is Renalase (328 aa).

FAD is bound by residues Ala13, 32-33, Arg40, and 56-57; these read DK and QY. Residues 57–61 and 96–98 contribute to the substrate site; these read YFTAR and SPD. Ile128 contributes to the FAD binding site. Thr185 contributes to the substrate binding site. Residue Asp302 participates in FAD binding. Arg308 is a substrate binding site. Val309 provides a ligand contact to FAD.

This sequence belongs to the bacterial renalase family. It depends on FAD as a cofactor.

The catalysed reaction is 1,2-dihydro-beta-NAD + O2 + H(+) = H2O2 + NAD(+). It catalyses the reaction 1,2-dihydro-beta-NADP + O2 + H(+) = H2O2 + NADP(+). The enzyme catalyses 1,6-dihydro-beta-NADP + O2 + H(+) = H2O2 + NADP(+). It carries out the reaction 1,6-dihydro-beta-NAD + O2 + H(+) = H2O2 + NAD(+). Functionally, catalyzes the oxidation of the 1,2-dihydro- and 1,6-dihydro- isomeric forms of beta-NAD(P) back to beta-NAD(P)+. Has a preference for 1,2-dihydro-beta-NAD as substrate. May serve to protect primary metabolism dehydrogenases from inhibition by the 1,2-dihydro- and 1,6-dihydro-beta-NAD(P) isomers. This Pseudomonas savastanoi pv. phaseolicola (strain 1448A / Race 6) (Pseudomonas syringae pv. phaseolicola (strain 1448A / Race 6)) protein is Renalase.